A 470-amino-acid chain; its full sequence is Light-independent protochlorophyllide reductase subunit N (470 aa).

Cys22, Cys47, and Cys107 together coordinate [4Fe-4S] cluster.

It belongs to the BchN/ChlN family. Protochlorophyllide reductase is composed of three subunits; ChlL, ChlN and ChlB. Forms a heterotetramer of two ChlB and two ChlN subunits. Requires [4Fe-4S] cluster as cofactor.

The protein localises to the plastid. The protein resides in the chloroplast. The enzyme catalyses chlorophyllide a + oxidized 2[4Fe-4S]-[ferredoxin] + 2 ADP + 2 phosphate = protochlorophyllide a + reduced 2[4Fe-4S]-[ferredoxin] + 2 ATP + 2 H2O. It functions in the pathway porphyrin-containing compound metabolism; chlorophyll biosynthesis (light-independent). In terms of biological role, component of the dark-operative protochlorophyllide reductase (DPOR) that uses Mg-ATP and reduced ferredoxin to reduce ring D of protochlorophyllide (Pchlide) to form chlorophyllide a (Chlide). This reaction is light-independent. The NB-protein (ChlN-ChlB) is the catalytic component of the complex. The chain is Light-independent protochlorophyllide reductase subunit N from Pinus koraiensis (Korean pine).